We begin with the raw amino-acid sequence, 597 residues long: Elongation factor 4 (597 aa).

One can recognise a tr-type G domain in the interval 2-184 (KHIRNFSIIA…TIVKSIPAPE (183 aa)). GTP-binding positions include 14-19 (DHGKST) and 131-134 (NKID).

The protein belongs to the TRAFAC class translation factor GTPase superfamily. Classic translation factor GTPase family. LepA subfamily.

Its subcellular location is the cell inner membrane. The enzyme catalyses GTP + H2O = GDP + phosphate + H(+). Its function is as follows. Required for accurate and efficient protein synthesis under certain stress conditions. May act as a fidelity factor of the translation reaction, by catalyzing a one-codon backward translocation of tRNAs on improperly translocated ribosomes. Back-translocation proceeds from a post-translocation (POST) complex to a pre-translocation (PRE) complex, thus giving elongation factor G a second chance to translocate the tRNAs correctly. Binds to ribosomes in a GTP-dependent manner. The protein is Elongation factor 4 of Aliivibrio fischeri (strain MJ11) (Vibrio fischeri).